Reading from the N-terminus, the 1071-residue chain is SLIT-ROBO Rho GTPase-activating protein 2 (1071 aa).

An F-BAR domain is found at 22–325 (KEIRAQLTEQ…AVENLDATSD (304 aa)). Residues 181-203 (LKEAEKQEEKQIGKSVKQEDRQT) are compositionally biased toward basic and acidic residues. A disordered region spans residues 181–211 (LKEAEKQEEKQIGKSVKQEDRQTPRSPDSTA). S206 bears the Phosphoserine mark. Residues 363–401 (QSELVQRRQQLQSRLSTLKIENEEVKKTMEATLQTIQDI) adopt a coiled-coil conformation. A phosphoserine mark is found at S427, S500, S691, S695, and S724. The region spanning 489-679 (ARRSSTVRKQ…TIIIQHENIF (191 aa)) is the Rho-GAP domain. Residues 703–726 (THGETISAEDSTQDVTAEHHTSDD) form a disordered region. In terms of domain architecture, SH3 spans 728–787 (CEPIEAIAKFDYVGRTARELSFKKGASLLLYQRASDDWWEGRHNGIDGLIPHQYIVVQDT). Disordered stretches follow at residues 794 to 820 (RSSP…GASC) and 835 to 936 (NKQR…NHRP). The residue at position 795 (S795) is a Phosphoserine. 3 stretches are compositionally biased toward polar residues: residues 857–867 (LGSSLTDSSSP), 874–885 (RPSSQPIMSQNL), and 897–907 (GHGSLNSISRH). At S916 the chain carries Phosphoserine. Polar residues predominate over residues 919–933 (IRKTATAGRSKSFNN). Symmetric dimethylarginine; by PRMT5 is present on R927. Residue S930 is modified to Phosphoserine. Residues 940-968 (EVIAQDIEATMNSALNELQELERQSSAKH) adopt a coiled-coil conformation. Residues 983–1012 (SPVVAPTSEPSSPLHTQLLKDPEPAFQRSA) form a disordered region. Residues S990, S994, S1013, and S1027 each carry the phosphoserine modification. The tract at residues 1029 to 1071 (KMAAPVKPPATRPKPTVFPKTNATSPGVNSSASPQSTDKSCTV) is disordered. Residues 1047 to 1071 (PKTNATSPGVNSSASPQSTDKSCTV) show a composition bias toward polar residues.

Homodimer. Forms a heterooligomer with SRGAP1 and SRGAP3 through its F-BAR domain. Interacts (via SH3 domain) with GPHN. Interacts (via SH3 domain) with FMNL1 (activated by RAC1); regulates the actin filament severing activity of FMNL1 and actin dynamics. Interacts (via SH3 domain) with FMNL3. Interacts with RAC1; specifically stimulates RAC1 GTPase activity. Interacts (via F-BAR domain) with HOMER1. Interacts with ROBO1 and ROBO2. Interacts with FASLG. Interacts with PRMT5. Post-translationally, methylation at Arg-927 is required for the stimulation of cell migration, dimerization and localization at the plasma membrane protrusions.

It is found in the cell membrane. Its subcellular location is the cell projection. It localises to the dendritic spine. The protein localises to the postsynaptic density. The protein resides in the postsynaptic cell membrane. It is found in the lamellipodium. Its subcellular location is the cytoplasmic vesicle. It localises to the phagosome. The protein localises to the nucleus. The protein resides in the cytoplasm. It is found in the cytosol. Postsynaptic RAC1 GTPase activating protein (GAP) that plays a key role in neuronal morphogenesis and migration mainly during development of the cerebral cortex. Regulates excitatory and inhibitory synapse maturation and density in cortical pyramidal neurons. SRGAP2/SRGAP2A limits excitatory and inhibitory synapse density through its RAC1-specific GTPase activating activity, while it promotes maturation of both excitatory and inhibitory synapses through its ability to bind to the postsynaptic scaffolding protein HOMER1 at excitatory synapses, and the postsynaptic protein GPHN at inhibitory synapses. Mechanistically, acts by binding and deforming membranes, thereby regulating actin dynamics to regulate cell migration and differentiation. Promotes cell repulsion and contact inhibition of locomotion: localizes to protrusions with curved edges and controls the duration of RAC1 activity in contact protrusions. In non-neuronal cells, may also play a role in cell migration by regulating the formation of lamellipodia and filopodia. This is SLIT-ROBO Rho GTPase-activating protein 2 from Rattus norvegicus (Rat).